A 484-amino-acid chain; its full sequence is Probable glycine dehydrogenase (decarboxylating) subunit 2 (484 aa).

Residue Lys-264 is modified to N6-(pyridoxal phosphate)lysine.

The protein belongs to the GcvP family. C-terminal subunit subfamily. As to quaternary structure, the glycine cleavage system is composed of four proteins: P, T, L and H. In this organism, the P 'protein' is a heterodimer of two subunits. Pyridoxal 5'-phosphate serves as cofactor.

The catalysed reaction is N(6)-[(R)-lipoyl]-L-lysyl-[glycine-cleavage complex H protein] + glycine + H(+) = N(6)-[(R)-S(8)-aminomethyldihydrolipoyl]-L-lysyl-[glycine-cleavage complex H protein] + CO2. Its function is as follows. The glycine cleavage system catalyzes the degradation of glycine. The P protein binds the alpha-amino group of glycine through its pyridoxal phosphate cofactor; CO(2) is released and the remaining methylamine moiety is then transferred to the lipoamide cofactor of the H protein. This Legionella pneumophila subsp. pneumophila (strain Philadelphia 1 / ATCC 33152 / DSM 7513) protein is Probable glycine dehydrogenase (decarboxylating) subunit 2.